The following is a 607-amino-acid chain: Arginine--tRNA ligase (607 aa).

The short motif at 147 to 157 is the 'HIGH' region element; the sequence is PNIAKEMHVGH.

The protein belongs to the class-I aminoacyl-tRNA synthetase family. In terms of assembly, monomer.

The protein resides in the cytoplasm. It catalyses the reaction tRNA(Arg) + L-arginine + ATP = L-arginyl-tRNA(Arg) + AMP + diphosphate. This is Arginine--tRNA ligase from Prochlorococcus marinus (strain NATL1A).